The following is a 172-amino-acid chain: uncharacterized protein (172 aa).

This is an uncharacterized protein from Microplitis demolitor bracovirus (isolate Webb) (MdBV).